A 425-amino-acid chain; its full sequence is MEFKQGDRVRIEKNGTVYEGKVMPSMEGYITIKMKSGYNAGFSIDKVSITPLENNGEAANGGNGGKNGQKEPEPAKEKVSKPGLPKVSILSTGGTIASKIDYRTGAVTSQFTADDILAAIPELKEIADFKGRAISSILSENMDPDSWQNLARAVVEEIEAGADGIIVTHGTDTMMYSAAALSFMIETPVPIVFVGSQRSADRPSSDNAMNAICAARVAISDIAEVVVVMHGTSSDDYCEIHRGTKVRKMHTSRRDAFKSVNSLPIGTVDYDTGEIKTFIEYTGRGEKSLKFKPGMEPKCAIVKFTPGADPSVLDCYVDGGYKGLVLEGTGLGHVSTKWIPFIRRAVDAKMPVIVTSQCLNGRVCDRVYDTGRDMLKAGAIEGEDTLPETALVKLMWVLGQTDEFEKAVSMLGENLSGEINECTLR.

Residues 53 to 84 (ENNGEAANGGNGGKNGQKEPEPAKEKVSKPGL) form a disordered region. The segment covering 68–80 (GQKEPEPAKEKVS) has biased composition (basic and acidic residues). The Asparaginase/glutaminase domain occupies 85–414 (PKVSILSTGG…EKAVSMLGEN (330 aa)). Catalysis depends on residues T95, T171, D172, and K248.

The protein belongs to the asparaginase 1 family. GatD subfamily. Heterodimer of GatD and GatE.

The catalysed reaction is L-glutamyl-tRNA(Gln) + L-glutamine + ATP + H2O = L-glutaminyl-tRNA(Gln) + L-glutamate + ADP + phosphate + H(+). Functionally, allows the formation of correctly charged Gln-tRNA(Gln) through the transamidation of misacylated Glu-tRNA(Gln) in organisms which lack glutaminyl-tRNA synthetase. The reaction takes place in the presence of glutamine and ATP through an activated gamma-phospho-Glu-tRNA(Gln). The GatDE system is specific for glutamate and does not act on aspartate. The protein is Glutamyl-tRNA(Gln) amidotransferase subunit D of Methanosarcina mazei (strain ATCC BAA-159 / DSM 3647 / Goe1 / Go1 / JCM 11833 / OCM 88) (Methanosarcina frisia).